Consider the following 807-residue polypeptide: Carbamoyltransferase HypF2 (807 aa).

The Acylphosphatase-like domain maps to 14-101 (RIRIRVRGVV…VDADGFAILE (88 aa)). 2 C4-type zinc fingers span residues 120 to 145 (CPDC…CTQC) and 170 to 195 (CRPC…CPDC). Residues 212–415 (VDPIAETVAR…HVQFIRRARG (204 aa)) form the YrdC-like domain. A disordered region spans residues 663-682 (WGEQPSPGRPKTVAHSLGGV).

Belongs to the carbamoyltransferase HypF family.

The catalysed reaction is C-terminal L-cysteinyl-[HypE protein] + carbamoyl phosphate + ATP + H2O = C-terminal S-carboxamide-L-cysteinyl-[HypE protein] + AMP + phosphate + diphosphate + H(+). Its pathway is protein modification; [NiFe] hydrogenase maturation. Involved in the maturation of [NiFe] hydrogenases. Along with HypE, it catalyzes the synthesis of the CN ligands of the active site iron of [NiFe]-hydrogenases. HypF functions as a carbamoyl transferase using carbamoylphosphate as a substrate and transferring the carboxamido moiety in an ATP-dependent reaction to the thiolate of the C-terminal cysteine of HypE yielding a protein-S-carboxamide. This is Carbamoyltransferase HypF2 (hypF2) from Cupriavidus necator (strain ATCC 17699 / DSM 428 / KCTC 22496 / NCIMB 10442 / H16 / Stanier 337) (Ralstonia eutropha).